The chain runs to 474 residues: tRNA-2-methylthio-N(6)-dimethylallyladenosine synthase (474 aa).

Positions 3-120 constitute an MTTase N-terminal domain; the sequence is KKLHIKTWGC…LPEMINSVRG (118 aa). 6 residues coordinate [4Fe-4S] cluster: C12, C49, C83, C157, C161, and C164. The Radical SAM core domain occupies 143–375; sequence RAEGPTAFVS…QERINQQAMA (233 aa). The 64-residue stretch at 378–441 folds into the TRAM domain; it reads RRMLGTTQRI…PNSLRGKVVR (64 aa).

It belongs to the methylthiotransferase family. MiaB subfamily. In terms of assembly, monomer. The cofactor is [4Fe-4S] cluster.

It localises to the cytoplasm. It catalyses the reaction N(6)-dimethylallyladenosine(37) in tRNA + (sulfur carrier)-SH + AH2 + 2 S-adenosyl-L-methionine = 2-methylsulfanyl-N(6)-dimethylallyladenosine(37) in tRNA + (sulfur carrier)-H + 5'-deoxyadenosine + L-methionine + A + S-adenosyl-L-homocysteine + 2 H(+). Catalyzes the methylthiolation of N6-(dimethylallyl)adenosine (i(6)A), leading to the formation of 2-methylthio-N6-(dimethylallyl)adenosine (ms(2)i(6)A) at position 37 in tRNAs that read codons beginning with uridine. This chain is tRNA-2-methylthio-N(6)-dimethylallyladenosine synthase, found in Shigella boydii serotype 18 (strain CDC 3083-94 / BS512).